We begin with the raw amino-acid sequence, 295 residues long: Glycine N-methyltransferase (295 aa).

The (6S)-5-methyl-5,6,7,8-tetrahydrofolate site is built by Ser-4 and Tyr-6. A Phosphoserine modification is found at Ser-10. Positions 22, 31, 34, and 41 each coordinate S-adenosyl-L-methionine. Phosphotyrosine is present on Tyr-34. Position 46 is an N6-succinyllysine (Lys-46). Residues Ala-65, 86–88 (DAS), 117–118 (NW), 139–142 (LGNS), and Arg-178 contribute to the S-adenosyl-L-methionine site. N6-succinyllysine occurs at positions 193, 198, and 203. His-217 is a binding site for (6S)-5-methyl-5,6,7,8-tetrahydrofolate. Tyr-223 lines the S-adenosyl-L-methionine pocket. Residue Arg-242 coordinates (6S)-5-methyl-5,6,7,8-tetrahydrofolate.

Belongs to the class I-like SAM-binding methyltransferase superfamily. Glycine N-methyltransferase family. Homotetramer. Abundant in liver.

The protein resides in the cytoplasm. It catalyses the reaction glycine + S-adenosyl-L-methionine = sarcosine + S-adenosyl-L-homocysteine + H(+). Inhibited by 5-methyltetrahydrofolate monoglutamate and by 5-methyltetrahydrofolate pentaglutamate, inhibition is much more effective by the pentaglutamate form than by the monoglutamate form. Two molecules of 5-methyltetrahydrofolate are bound per tetramer. The binding sites are localized between subunits. Inhibitor binding may preclude movements of the polypeptide chain that are necessary for enzyme activity. Its function is as follows. Catalyzes the methylation of glycine by using S-adenosylmethionine (AdoMet) to form N-methylglycine (sarcosine) with the concomitant production of S-adenosylhomocysteine (AdoHcy), a reaction regulated by the binding of 5-methyltetrahydrofolate. Plays an important role in the regulation of methyl group metabolism by regulating the ratio between S-adenosyl-L-methionine and S-adenosyl-L-homocysteine. In Oryctolagus cuniculus (Rabbit), this protein is Glycine N-methyltransferase (GNMT).